Reading from the N-terminus, the 145-residue chain is Partner of bursicon (145 aa).

An N-terminal signal peptide occupies residues 1 to 28 (MKENFSIMFIHSIFLILIIFIYSNETIA). 5 disulfides stabilise this stretch: Cys36–Cys94, Cys60–Cys109, Cys69–Cys135, Cys73–Cys137, and Cys91–Cys140. The CTCK domain occupies 36–131 (CETLQSEVHI…NGVMEIKIRE (96 aa)).

Heterodimer of burs and pburs.

It is found in the secreted. Functionally, final heterodimeric neurohormone released at the end of the molting cycle, involved in the sclerotization (tanning) of the insect cuticle, melanization and wing spreading. In Apis mellifera (Honeybee), this protein is Partner of bursicon (pburs).